A 3946-amino-acid polypeptide reads, in one-letter code: Hybrid PKS-NRPS synthetase lepA (3946 aa).

The Ketosynthase family 3 (KS3) domain occupies 9-440 (VEPIAIVGSA…GTNAHVILEG (432 aa)). Residues C183, H320, and H363 each act as for beta-ketoacyl synthase activity in the active site. The segment at 553 to 871 (IFTGQGAQWA…PYAGIMRRAT (319 aa)) is malonyl-CoA:ACP transacylase (MAT) domain. An N-terminal hotdog fold region spans residues 945 to 1073 (HELLGRRAPD…GRLILFKGEG (129 aa)). A dehydratase (DH) domain region spans residues 945–1238 (HELLGRRAPD…RLQSFTEAKA (294 aa)). One can recognise a PKS/mFAS DH domain in the interval 945–1239 (HELLGRRAPD…LQSFTEAKAL (295 aa)). Catalysis depends on H977, which acts as the Proton acceptor; for dehydratase activity. Positions 1088–1239 (LSPLDREMFY…LQSFTEAKAL (152 aa)) are C-terminal hotdog fold. The active-site Proton donor; for dehydratase activity is D1147. The methyltransferase (MT) domain stretch occupies residues 1380 to 1580 (LLNRFYTDGR…ATVSDLPSDG (201 aa)). The interval 2093–2266 (TYWMIGLNSE…AASVIDIGLV (174 aa)) is ketoreductase (KR) domain. Residues 2352 to 2365 (SSQDSDQSNSTSAS) are compositionally biased toward low complexity. The tract at residues 2352–2372 (SSQDSDQSNSTSASIRDQVSS) is disordered. The region spanning 2378–2455 (EGTDVLLRCF…EICAEAIQKF (78 aa)) is the Carrier 1 domain. Position 2415 is an O-(pantetheine 4'-phosphoryl)serine (S2415). Positions 2474 to 2531 (KQATASPPEIGREEAQSTSRAGILPTDQDNDNSSDSESQRKSGASSSSGSGTRTPTSI) are disordered. Residues 2508–2530 (DSESQRKSGASSSSGSGTRTPTS) show a composition bias toward low complexity. The segment at 2547–2976 (PMSYAQSRLW…MQIQDGLLND (430 aa)) is condensation (C) domain. The segment at 3000 to 3402 (FSQRAATDAN…GGLIFMGRLD (403 aa)) is adenylation (A) (KR) domain. The segment at 3492–3511 (GKVDRKALQDKPLPTEPDSS) is disordered. In terms of domain architecture, Carrier 2 spans 3515 to 3594 (EALSLAEGEL…RMATLIDAEK (80 aa)). At S3554 the chain carries O-(pantetheine 4'-phosphoryl)serine. The interval 3633–3833 (LTGSTGFLGM…RFSVLMKVVP (201 aa)) is reductase (RED) domain.

It in the C-terminal section; belongs to the NRP synthetase family.

Hybrid PKS-NRPS synthetase; part of the gene cluster 23 that mediates the biosynthesis of a family of 2-pyridones known as leporins. The hybrid PKS-NRPS synthetase lepA and the enoyl reductase lepG are responsible for fusion of phenylalanine with a hexaketide and subsequent release of the stable tetramic acid precursor, pre-leporin C. Because lepA lacks a designated enoylreductase (ER) domain, the required activity is provided the enoyl reductase lepG. It is possible that the dehydrogenase lepF also participates in production of pre-leporin C. Cytochrome P450 monooxygenase lepH is then required for the ring expansion step to yield leporin C. Leporin C is then presumably further oxidized by the N-hydroxylase lepD to form leporin B. LepI may possess a function in biosynthesis upstream of lepA. Leporin B is further oxidized in the presence of ferric ion to give the leporin B trimer-iron chelate, but whether or not this reaction is catalyzed by an enzyme in the pathway or by ferric ion is not determined yet. The sequence is that of Hybrid PKS-NRPS synthetase lepA from Aspergillus flavus (strain ATCC 200026 / FGSC A1120 / IAM 13836 / NRRL 3357 / JCM 12722 / SRRC 167).